The sequence spans 440 residues: Tol-Pal system protein TolB (440 aa).

Residues 1–28 (MVMTRRIFFSWFIVICSLWLSSFSSVHA) form the signal peptide. Residues 417–440 (RNERQLPTPNDASDPAWSPLLNMQ) are disordered.

Belongs to the TolB family. In terms of assembly, the Tol-Pal system is composed of five core proteins: the inner membrane proteins TolA, TolQ and TolR, the periplasmic protein TolB and the outer membrane protein Pal. They form a network linking the inner and outer membranes and the peptidoglycan layer.

The protein resides in the periplasm. Its function is as follows. Part of the Tol-Pal system, which plays a role in outer membrane invagination during cell division and is important for maintaining outer membrane integrity. The sequence is that of Tol-Pal system protein TolB from Bartonella quintana (strain Toulouse) (Rochalimaea quintana).